Consider the following 253-residue polypeptide: Triosephosphate isomerase (253 aa).

9–11 is a substrate binding site; it reads NWK. The active-site Electrophile is H95. E167 serves as the catalytic Proton acceptor. Residues G173, S213, and 234 to 235 each bind substrate; that span reads GG. S213 carries the phosphoserine modification.

It belongs to the triosephosphate isomerase family. As to quaternary structure, homodimer.

It is found in the cytoplasm. It catalyses the reaction D-glyceraldehyde 3-phosphate = dihydroxyacetone phosphate. It participates in carbohydrate biosynthesis; gluconeogenesis. The protein operates within carbohydrate degradation; glycolysis; D-glyceraldehyde 3-phosphate from glycerone phosphate: step 1/1. Involved in the gluconeogenesis. Catalyzes stereospecifically the conversion of dihydroxyacetone phosphate (DHAP) to D-glyceraldehyde-3-phosphate (G3P). The protein is Triosephosphate isomerase of Bacillus velezensis (strain DSM 23117 / BGSC 10A6 / LMG 26770 / FZB42) (Bacillus amyloliquefaciens subsp. plantarum).